Reading from the N-terminus, the 244-residue chain is 5-oxoprolinase subunit A (244 aa).

Belongs to the LamB/PxpA family. As to quaternary structure, forms a complex composed of PxpA, PxpB and PxpC.

It carries out the reaction 5-oxo-L-proline + ATP + 2 H2O = L-glutamate + ADP + phosphate + H(+). Catalyzes the cleavage of 5-oxoproline to form L-glutamate coupled to the hydrolysis of ATP to ADP and inorganic phosphate. This Escherichia coli (strain SE11) protein is 5-oxoprolinase subunit A.